The sequence spans 349 residues: uncharacterized protein (349 aa).

Residues M1–S29 form the signal peptide.

This is an uncharacterized protein from Borreliella burgdorferi (strain ATCC 35210 / DSM 4680 / CIP 102532 / B31) (Borrelia burgdorferi).